A 245-amino-acid chain; its full sequence is Adapter protein MecA (245 aa).

It belongs to the MecA family. In terms of assembly, homodimer.

Enables the recognition and targeting of unfolded and aggregated proteins to the ClpC protease or to other proteins involved in proteolysis. The protein is Adapter protein MecA of Streptococcus pneumoniae serotype 4 (strain ATCC BAA-334 / TIGR4).